We begin with the raw amino-acid sequence, 286 residues long: Polyamine aminopropyltransferase (286 aa).

A PABS domain is found at 5–238 (TMWHETLHDQ…GIMTFAWATD (234 aa)). S-methyl-5'-thioadenosine is bound at residue Q33. The spermidine site is built by H64 and D88. Residues E108 and 140–141 (DG) contribute to the S-methyl-5'-thioadenosine site. D158 acts as the Proton acceptor in catalysis. Residue 158–161 (DCTD) participates in spermidine binding. P165 serves as a coordination point for S-methyl-5'-thioadenosine.

It belongs to the spermidine/spermine synthase family. As to quaternary structure, homodimer or homotetramer.

Its subcellular location is the cytoplasm. The catalysed reaction is S-adenosyl 3-(methylsulfanyl)propylamine + putrescine = S-methyl-5'-thioadenosine + spermidine + H(+). Its pathway is amine and polyamine biosynthesis; spermidine biosynthesis; spermidine from putrescine: step 1/1. Catalyzes the irreversible transfer of a propylamine group from the amino donor S-adenosylmethioninamine (decarboxy-AdoMet) to putrescine (1,4-diaminobutane) to yield spermidine. The polypeptide is Polyamine aminopropyltransferase (Salmonella newport (strain SL254)).